The primary structure comprises 188 residues: C-type lectin domain family 5 member A (188 aa).

Topologically, residues Met-1–His-4 are cytoplasmic. Residues Met-5–Phe-27 form a helical; Signal-anchor for type II membrane protein membrane-spanning segment. Topologically, residues Pro-28–Lys-188 are extracellular. Asn-32 is a glycosylation site (N-linked (GlcNAc...) asparagine). Cysteines 71 and 82 form a disulfide. One can recognise a C-type lectin domain in the interval Tyr-78–Glu-184. Residues Asn-93, Asn-144, and Asn-151 are each glycosylated (N-linked (GlcNAc...) asparagine). 2 disulfide bridges follow: Cys-99-Cys-183 and Cys-161-Cys-175.

As to quaternary structure, monomer. Homodimer. The majority of CLEC5A is expressed as a monomeric form on macrophages. Interacts with TYROBP/DAP12. The interaction with TYROBP is required for CLEC5A cell surface expression. Interacts with HCST/DAP10. Forms a CLEC5A/TYROBP/HCST trimolecular complex depending almost solely on TYROBP. In terms of assembly, (Microbial infection) Interacts with dengue virus envelope protein E. Post-translationally, N-glycosylated. Contains sialic acid residues. As to expression, highly expressed in bone marrow with lower levels in synovium, lung and bronchus. Expressed in peripheral blood monocytes and in the monocyte/macrophage cell lines U-937 and Mono-Mac-6, but not in cell lines of other origins. Expression is down-regulated when monocytes differentiate into dendritic cells.

The protein resides in the cell membrane. In terms of biological role, functions as a positive regulator of osteoclastogenesis. Cell surface receptor that signals via TYROBP. Regulates inflammatory responses. Functionally, (Microbial infection) Critical macrophage receptor for dengue virus serotypes 1-4. The binding of dengue virus to CLEC5A triggers signaling through the phosphorylation of TYROBP. This interaction does not result in viral entry, but stimulates pro-inflammatory cytokine release. The polypeptide is C-type lectin domain family 5 member A (CLEC5A) (Homo sapiens (Human)).